Consider the following 215-residue polypeptide: N-(5'-phosphoribosyl)anthranilate isomerase (215 aa).

The protein belongs to the TrpF family.

The enzyme catalyses N-(5-phospho-beta-D-ribosyl)anthranilate = 1-(2-carboxyphenylamino)-1-deoxy-D-ribulose 5-phosphate. It functions in the pathway amino-acid biosynthesis; L-tryptophan biosynthesis; L-tryptophan from chorismate: step 3/5. In Pelodictyon phaeoclathratiforme (strain DSM 5477 / BU-1), this protein is N-(5'-phosphoribosyl)anthranilate isomerase.